A 186-amino-acid polypeptide reads, in one-letter code: Ribosome rescue factor SmrB (186 aa).

Positions 99 to 174 (IDLHGLTQHQ…SDAAIIVIIE (76 aa)) constitute a Smr domain.

Belongs to the SmrB family. In terms of assembly, associates with collided ribosomes, but not with correctly translating polysomes.

In terms of biological role, acts as a ribosome collision sensor. Detects stalled/collided disomes (pairs of ribosomes where the leading ribosome is stalled and a second ribosome has collided with it) and endonucleolytically cleaves mRNA at the 5' boundary of the stalled ribosome. Stalled/collided disomes form a new interface (primarily via the 30S subunits) that binds SmrB. Cleaved mRNA becomes available for tmRNA ligation, leading to ribosomal subunit dissociation and rescue of stalled ribosomes. The protein is Ribosome rescue factor SmrB of Buchnera aphidicola subsp. Acyrthosiphon pisum (strain 5A).